Reading from the N-terminus, the 1044-residue chain is Isoleucine--tRNA ligase (1044 aa).

The short motif at 48–58 (PFATGLPHFGH) is the 'HIGH' region element. The short motif at 594 to 598 (KMSKS) is the 'KMSKS' region element. Lys597 contributes to the ATP binding site.

The protein belongs to the class-I aminoacyl-tRNA synthetase family. IleS type 2 subfamily. In terms of assembly, monomer. Zn(2+) serves as cofactor.

Its subcellular location is the cytoplasm. It catalyses the reaction tRNA(Ile) + L-isoleucine + ATP = L-isoleucyl-tRNA(Ile) + AMP + diphosphate. In terms of biological role, catalyzes the attachment of isoleucine to tRNA(Ile). As IleRS can inadvertently accommodate and process structurally similar amino acids such as valine, to avoid such errors it has two additional distinct tRNA(Ile)-dependent editing activities. One activity is designated as 'pretransfer' editing and involves the hydrolysis of activated Val-AMP. The other activity is designated 'posttransfer' editing and involves deacylation of mischarged Val-tRNA(Ile). This chain is Isoleucine--tRNA ligase, found in Borrelia duttonii (strain Ly).